A 341-amino-acid chain; its full sequence is Serine/threonine-protein kinase PDIK1L (341 aa).

Positions 8–334 (YDLIREVGRG…LELRLVQIAF (327 aa)) constitute a Protein kinase domain. ATP contacts are provided by residues 14-22 (VGRGSYGVV) and K37. D164 acts as the Proton acceptor in catalysis.

It belongs to the protein kinase superfamily. Ser/Thr protein kinase family.

The protein localises to the nucleus. It catalyses the reaction L-seryl-[protein] + ATP = O-phospho-L-seryl-[protein] + ADP + H(+). The enzyme catalyses L-threonyl-[protein] + ATP = O-phospho-L-threonyl-[protein] + ADP + H(+). The chain is Serine/threonine-protein kinase PDIK1L (Pdik1l) from Mus musculus (Mouse).